The chain runs to 205 residues: Probable calcium-binding protein CML41 (205 aa).

The segment at 26-55 (SFQNRRRSPKSNSSSTLNSPRSNSDDNNNI) is disordered. The segment covering 35 to 54 (KSNSSSTLNSPRSNSDDNNN) has biased composition (low complexity). EF-hand domains follow at residues 60-95 (ASKEELRQVFSHFDSDGDGKISAFELRHYFGSVGEY), 96-131 (ISHEAAQEAINEVDTDADGSLGFEDFVGLMTRRDLY), 137-173 (DGDGELKTAFEMFEVEKGSGCITPKGLQKMLVKLGES), and 174-205 (RTYGECEAMIKFYDIDGNGILDFHEFRQMMTV). Positions 73, 75, 77, 79, 84, 109, 111, 113, 115, and 120 each coordinate Ca(2+). Ca(2+) is bound by residues Asp187, Asp189, Asn191, and Glu198.

Potential calcium sensor. This is Probable calcium-binding protein CML41 (CML41) from Arabidopsis thaliana (Mouse-ear cress).